A 206-amino-acid polypeptide reads, in one-letter code: Large ribosomal subunit protein uL4 (206 aa).

The segment covering 65–76 (KQKGTGRARHSS) has biased composition (basic residues). The interval 65–94 (KQKGTGRARHSSARAPQFRGGGKAHGPVVR) is disordered.

Belongs to the universal ribosomal protein uL4 family. As to quaternary structure, part of the 50S ribosomal subunit.

Its function is as follows. One of the primary rRNA binding proteins, this protein initially binds near the 5'-end of the 23S rRNA. It is important during the early stages of 50S assembly. It makes multiple contacts with different domains of the 23S rRNA in the assembled 50S subunit and ribosome. In terms of biological role, forms part of the polypeptide exit tunnel. This is Large ribosomal subunit protein uL4 from Bartonella quintana (strain Toulouse) (Rochalimaea quintana).